Consider the following 234-residue polypeptide: MLTYETWEENDVSFSEEDETKGALSVLSWAYKEYENEIVYACSFGVEGMVLLHLINQVNPSAKVVFLDTNVHFQETYELIQKVRERFPSLNIIEKQPKLTLDEQAKLHGNKLWESNPNLCCKIRKILPLEESLANEKAWISGLRREQSETRKHTKFINQDHRFQSIKVCPLIHWTWKEVWRYVYKHSLPYNPLHDIGYPSIGCEKCTLPVGEGGDSRDGRWAGKVKTECGLHYQ.

Positions 120, 121, 203, and 206 each coordinate [4Fe-4S] cluster. Cysteine 229 (nucleophile; cysteine thiosulfonate intermediate) is an active-site residue.

This sequence belongs to the PAPS reductase family. CysH subfamily. Requires [4Fe-4S] cluster as cofactor.

The protein localises to the cytoplasm. The enzyme catalyses [thioredoxin]-disulfide + sulfite + AMP + 2 H(+) = adenosine 5'-phosphosulfate + [thioredoxin]-dithiol. It functions in the pathway sulfur metabolism; hydrogen sulfide biosynthesis; sulfite from sulfate. Functionally, catalyzes the formation of sulfite from adenosine 5'-phosphosulfate (APS) using thioredoxin as an electron donor. In Bacillus cereus (strain AH187), this protein is Adenosine 5'-phosphosulfate reductase.